A 556-amino-acid polypeptide reads, in one-letter code: Zinc finger protein GLI1 (556 aa).

Disordered regions lie at residues 57–83 (TEHP…KKRA), 133–178 (SLGY…TPAR), and 200–222 (KYPE…QDPL). Residues 135–148 (GYQNPPGQQKGQGQ) are compositionally biased toward low complexity. 5 C2H2-type zinc fingers span residues 247–272 (TNCY…NNEH), 280–307 (FVCH…MRRH), 313–337 (HKCT…LRSH), 343–368 (YVCE…NRTH), and 374–399 (YICK…KTVH). Residues 295–303 (KAQYMLVVH) are interaction with DNA. 2 interaction with DNA regions span residues 357–362 (ASDRAK) and 387–393 (DPSSLRK). The tract at residues 387–492 (DPSSLRKHVK…VEMTGNTGGS (106 aa)) is disordered. Residues 454-472 (SKPQPSPGGQSSCSSDRSP) are compositionally biased toward low complexity.

It belongs to the GLI C2H2-type zinc-finger protein family.

It localises to the cytoplasm. The protein resides in the nucleus. Functionally, acts as a transcriptional activator. Binds to the DNA consensus sequence 5'-GACCACCCA-3'. May regulate the transcription of specific genes during normal development. May play a role in craniofacial development and digital development, as well as development of the central nervous system and gastrointestinal tract. Mediates SHH signaling. Plays a role in cell proliferation and differentiation via its role in SHH signaling. The polypeptide is Zinc finger protein GLI1 (GLI1) (Gallus gallus (Chicken)).